The sequence spans 283 residues: Elongation factor Ts (283 aa).

The tract at residues 80 to 83 (TDFV) is involved in Mg(2+) ion dislocation from EF-Tu.

The protein belongs to the EF-Ts family.

The protein resides in the cytoplasm. Functionally, associates with the EF-Tu.GDP complex and induces the exchange of GDP to GTP. It remains bound to the aminoacyl-tRNA.EF-Tu.GTP complex up to the GTP hydrolysis stage on the ribosome. In Haemophilus influenzae (strain PittGG), this protein is Elongation factor Ts.